A 561-amino-acid polypeptide reads, in one-letter code: BTB/POZ domain-containing protein At2g46260 (561 aa).

Disordered stretches follow at residues 1–31 and 100–119; these read MRGSNNTDLFDPKTEMDSNFSRHGSSSEGDF and LTDNNQPDMDDAPGGDNLDD. Residues 17–28 are compositionally biased toward polar residues; that stretch reads DSNFSRHGSSSE. Residues 107–119 are compositionally biased toward acidic residues; it reads DMDDAPGGDNLDD. The region spanning 143 to 212 is the BTB domain; the sequence is IDCSTVVRVK…MYSNSLSVTT (70 aa). Residues 266 to 358 enclose the BACK domain; the sequence is QPLTDAAKQF…YMTCRKLKKV (93 aa).

It functions in the pathway protein modification; protein ubiquitination. In terms of biological role, may act as a substrate-specific adapter of an E3 ubiquitin-protein ligase complex (CUL3-RBX1-BTB) which mediates the ubiquitination and subsequent proteasomal degradation of target proteins. The polypeptide is BTB/POZ domain-containing protein At2g46260 (Arabidopsis thaliana (Mouse-ear cress)).